We begin with the raw amino-acid sequence, 80 residues long: Putative antitoxin VapB44 (80 aa).

Residues 40–68 (NQNPQPAASQEDAFHGFEPLPHRGGAVSN) are disordered.

In terms of biological role, possibly the antitoxin component of a type II toxin-antitoxin (TA) system. Its cognate toxin is VapC44 (Potential). This chain is Putative antitoxin VapB44 (vapB44), found in Mycobacterium tuberculosis (strain CDC 1551 / Oshkosh).